Consider the following 431-residue polypeptide: Serine hydroxymethyltransferase 2 (431 aa).

Residues leucine 131 and 135-137 contribute to the (6S)-5,6,7,8-tetrahydrofolate site; that span reads GHL. Lysine 240 carries the post-translational modification N6-(pyridoxal phosphate)lysine.

This sequence belongs to the SHMT family. As to quaternary structure, homodimer. Requires pyridoxal 5'-phosphate as cofactor.

Its subcellular location is the cytoplasm. It catalyses the reaction (6R)-5,10-methylene-5,6,7,8-tetrahydrofolate + glycine + H2O = (6S)-5,6,7,8-tetrahydrofolate + L-serine. It functions in the pathway one-carbon metabolism; tetrahydrofolate interconversion. Its pathway is amino-acid biosynthesis; glycine biosynthesis; glycine from L-serine: step 1/1. Its function is as follows. Catalyzes the reversible interconversion of serine and glycine with tetrahydrofolate (THF) serving as the one-carbon carrier. This reaction serves as the major source of one-carbon groups required for the biosynthesis of purines, thymidylate, methionine, and other important biomolecules. Also exhibits THF-independent aldolase activity toward beta-hydroxyamino acids, producing glycine and aldehydes, via a retro-aldol mechanism. The sequence is that of Serine hydroxymethyltransferase 2 from Vibrio parahaemolyticus serotype O3:K6 (strain RIMD 2210633).